A 391-amino-acid polypeptide reads, in one-letter code: 4-coumarate--CoA ligase (391 aa).

Belongs to the ATP-dependent AMP-binding enzyme family.

The enzyme catalyses (E)-4-coumarate + ATP + CoA = (E)-4-coumaroyl-CoA + AMP + diphosphate. Converts p-coumaric acid into p-coumaryl CoA. This is necessary for the activation of the photoactive yellow protein (PYP) chromophore. The protein is 4-coumarate--CoA ligase (pcl) of Halorhodospira halophila (Ectothiorhodospira halophila).